The following is a 213-amino-acid chain: High frequency lysogenization protein HflD (213 aa).

The stretch at 79 to 126 (QGLNAELTRYTLSLMVLERKLSSAKGALDTLGNRINGLQRQLEHFDLQ) forms a coiled coil.

Belongs to the HflD family. In terms of assembly, interacts with CII protein from phage lambda.

The protein resides in the cytoplasm. It localises to the cell inner membrane. Negative regulator of phage lambda lysogenization. Contributes to the degradation of the phage regulatory protein CII. Acts probably by holding CII on the membrane surface, away from the target promoters, but close to the FtsH protease. The protein is High frequency lysogenization protein HflD of Escherichia coli O127:H6 (strain E2348/69 / EPEC).